The sequence spans 453 residues: Tol-Pal system protein TolB (453 aa).

Positions Met1–Ala31 are cleaved as a signal peptide.

This sequence belongs to the TolB family. In terms of assembly, the Tol-Pal system is composed of five core proteins: the inner membrane proteins TolA, TolQ and TolR, the periplasmic protein TolB and the outer membrane protein Pal. They form a network linking the inner and outer membranes and the peptidoglycan layer.

It is found in the periplasm. Its function is as follows. Part of the Tol-Pal system, which plays a role in outer membrane invagination during cell division and is important for maintaining outer membrane integrity. This chain is Tol-Pal system protein TolB, found in Orientia tsutsugamushi (strain Boryong) (Rickettsia tsutsugamushi).